The primary structure comprises 480 residues: Pyruvate kinase II (480 aa).

R36 contacts substrate. N38, S40, and D70 together coordinate K(+). 38–41 contacts ATP; it reads NFSH. ATP-binding residues include R77 and K160. A substrate-binding site is contributed by K223. E225 is a binding site for Mg(2+). 3 residues coordinate substrate: G251, D252, and T284. D252 is a Mg(2+) binding site.

Belongs to the pyruvate kinase family. As to quaternary structure, homotetramer. It depends on Mg(2+) as a cofactor. The cofactor is K(+).

It carries out the reaction pyruvate + ATP = phosphoenolpyruvate + ADP + H(+). Its pathway is carbohydrate degradation; glycolysis; pyruvate from D-glyceraldehyde 3-phosphate: step 5/5. Its activity is regulated as follows. Allosterically activated by AMP and by several sugar phosphates. Belongs to type II PK. Functionally, catalyzes the formation of pyruvate in the last step of glycolysis, it is irreversible under physiological conditions. The reaction is critical for the control of metabolic flux in the second part of glycolysis. The sequence is that of Pyruvate kinase II (pykA) from Salmonella typhimurium (strain LT2 / SGSC1412 / ATCC 700720).